A 783-amino-acid polypeptide reads, in one-letter code: Tripartite motif-containing protein 67 (783 aa).

An RING-type; degenerate zinc finger spans residues 7 to 42; that stretch reads CPVCGSLFREPIILPCSHNVCLPCARTIAVQTPDGE. The B box-type 1; degenerate zinc-finger motif lies at 206–253; the sequence is AICQLCDRTPPEPAATLCEQCDVLYCSACQLKCHPSRGPFAKHRLVQP. Positions 247-295 are disordered; the sequence is KHRLVQPPPPPPPPAEAASGPTGTAQGAPSGGGGCKSPGGAGAGATGGS. Positions 252-261 are enriched in pro residues; that stretch reads QPPPPPPPPA. The segment covering 275–293 has biased composition (gly residues); that stretch reads PSGGGGCKSPGGAGAGATG. The B box-type 2 zinc finger occupies 298 to 340; it reads RKFPTCPEHEMENYSMYCVSCRTPVCYLCLEEGRHAKHEVKPL. Zn(2+)-binding residues include C303, H306, C326, and H332. A coiled-coil region spans residues 345-382; sequence KQHKAQLSQALNGVSDKAKEAKEFLVQLKNILQQIQEN. Positions 448-506 constitute a COS domain; it reads IKENDPSGFLQISDALIKRVQVSQEQWVKGALEPKVSAEFDLTLDSEPLLQAIHQLDFI. The region spanning 513–607 is the Fibronectin type-III domain; the sequence is PPVPLLQLEK…KTVVLQTSDV (95 aa). In terms of domain architecture, B30.2/SPRY spans 589 to 780; that stretch reads NSSGVGPYSK…VPTNLGRPKL (192 aa).

It belongs to the TRIM/RBCC family.

Its subcellular location is the cytoplasm. It localises to the cytoskeleton. This chain is Tripartite motif-containing protein 67 (TRIM67), found in Homo sapiens (Human).